Here is a 652-residue protein sequence, read N- to C-terminus: MKNTHVDLICVFLSIFIGIGEAVDVYTNHFHVHLKEGGGLEDAHRIAKRHGFINRGQVAASDNEYHFVQPALVHARTRRSAGHHAKLHNDDEVLHVEQLKGYTRTKRGYRPLEQRLESQFDFSAVMSPSDPLYGYQWYLKNTGQAGGKARLDLNVERAWAMGFTGKNITTAIMDDGVDYMHPDIKNNFNAEASYDFSSNDPFPYPRYTDDWFNSHGTRCAGEIVAARDNGVCGVGVAYDGKVAGIRMLDQPYMTDLIEANSMGHEPSKIHIYSASWGPTDDGKTVDGPRNATMRAIVRGVNEGRNGLGSIFVWASGDGGEDDDCNCDGYAASMWTISINSAINNGENAHYDESCSSTLASTFSNGGRNPETGVATTDLYGRCTRSHSGTSAAAPEAAGVFALALEANPSLTWRDLQHLTVLTSSRNSLFDGRCRDFPSLGINDNHRDSHGNCSHFEWQMNGVGLEYNHLFGFGVLDAAEMVMLAMAWKTSPPRYHCTAGLIDTPHEIPADGNLILEINTDGCAGSQFEVRYLEHVQAVVSFNSTRRGDTTLYLISPMGTRTMILSRRPKDDDSKDGFTNWPFMTTHTWGENPTGKWRLVARFQGPGAHAGTLKKFELMLHGTREAPYNLIEPIVGQTNKKLDTVQKAHKRSH.

The first 22 residues, 1–22 (MKNTHVDLICVFLSIFIGIGEA), serve as a signal peptide directing secretion. Residues 23–107 (VDVYTNHFHV…QLKGYTRTKR (85 aa)) constitute a propeptide that is removed on maturation. A Peptidase S8 domain is found at 136–481 (QWYLKNTGQA…FGVLDAAEMV (346 aa)). N-linked (GlcNAc...) asparagine glycosylation is present at asparagine 167. Active-site charge relay system residues include aspartate 174 and histidine 215. 2 disulfides stabilise this stretch: cysteine 232–cysteine 382 and cysteine 324–cysteine 354. N-linked (GlcNAc...) asparagine glycosylation occurs at asparagine 290. Serine 390 acts as the Charge relay system in catalysis. Asparagine 451 carries an N-linked (GlcNAc...) asparagine glycan. Residues 489–625 (TSPPRYHCTA…ELMLHGTREA (137 aa)) form the P/Homo B domain. Cysteine 496 and cysteine 522 are disulfide-bonded. The segment at 501-652 (IDTPHEIPAD…TVQKAHKRSH (152 aa)) is required for ubiquitination-mediated degradation. N-linked (GlcNAc...) asparagine glycosylation is present at asparagine 542.

Belongs to the peptidase S8 family. Furin subfamily. In terms of assembly, interacts (via C-terminus) with F-box protein fsn-1 (via SPRY domain); the interaction results in egl-3 proteasomal degradation. Post-translationally, ubiquitinated. In terms of tissue distribution, expressed in head and tail ganglia. Expressed in neurons including mechanosensory and motor neurons, and interneurons (at protein level). Expressed in the nerve ring, ventral nerve cord and intestine.

It is found in the cell projection. The protein resides in the axon. Its subcellular location is the cytoplasmic vesicle. It localises to the secretory vesicle lumen. The protein localises to the secreted. The enzyme catalyses Release of protein hormones and neuropeptides from their precursors, generally by hydrolysis of -Lys-Arg-|- bonds.. In terms of biological role, serine endoprotease which cleaves preproteins at paired basic amino acids. Processes FMRFamide-like (flp) and neuropeptide-like protein (nlp) neuropeptides. Probably by processing flp-1 and flp-18, modulates the neuronal excitation-inhibition balance and thus the level of activity of the locomotor circuit. Regulates sensitivity to mechanosensory stimuli. By processing neuropeptides, modulates basal acetylcholine release at the ventral cord neuromuscular junctions. Probably by processing flp neuropeptides, regulates the turning step of male mating behavior. Cleaves pro-insulin-like proteins ins-3, ins-4 and ins-6 into their mature active forms. Together with convertase kpc-1, cleaves pro-insulin-like protein ins-18. By controlling ins-4 and ins-6 processing and thus the activation of the daf-2/InsR pathway, negatively modulates synapse development and synaptic transmission at neuromuscular junctions. Similarly, by controlling ins-4 and ins-6 processing, negatively regulates dauer formation under optimal environmental conditions. Under adverse environmental conditions, may promote dauer formation by processing ins-18, a daf-2/InsR antagonist. May cleave dense-core vesicle membrane protein ida-1. Involved in egg-laying, fat storage and locomotion. The chain is Neuroendocrine convertase 2 from Caenorhabditis elegans.